Consider the following 190-residue polypeptide: Probable gluconokinase (190 aa).

Gly7 to Thr14 serves as a coordination point for ATP.

This sequence belongs to the gluconokinase GntK/GntV family.

It catalyses the reaction D-gluconate + ATP = 6-phospho-D-gluconate + ADP + H(+). The protein operates within carbohydrate acid metabolism; D-gluconate degradation. In Xenopus tropicalis (Western clawed frog), this protein is Probable gluconokinase (idnk).